The chain runs to 538 residues: Putative cysteine ligase BshC (538 aa).

Residues 460-484 (KINEQIELLERMLKRNVEKKHEVEL) are a coiled coil.

Belongs to the BshC family.

In terms of biological role, involved in bacillithiol (BSH) biosynthesis. May catalyze the last step of the pathway, the addition of cysteine to glucosamine malate (GlcN-Mal) to generate BSH. The sequence is that of Putative cysteine ligase BshC from Bacillus anthracis (strain A0248).